The primary structure comprises 609 residues: Membrane protein insertase YidC (609 aa).

The helical transmembrane segment at 9-29 (IIAIVLSGLILIAWQYFYNIP) threads the bilayer. A disordered region spans residues 35–63 (RAAQQAQSQTAKSPTEPTPNSPKPDHPAA). 4 helical membrane passes run 375–395 (VFGN…AIFF), 449–469 (LPMV…FVTI), 507–527 (LLGP…TMWF), and 546–566 (WMPV…VIYW).

The protein belongs to the OXA1/ALB3/YidC family. Type 1 subfamily. Interacts with the Sec translocase complex via SecD. Specifically interacts with transmembrane segments of nascent integral membrane proteins during membrane integration.

The protein localises to the cell inner membrane. In terms of biological role, required for the insertion and/or proper folding and/or complex formation of integral membrane proteins into the membrane. Involved in integration of membrane proteins that insert both dependently and independently of the Sec translocase complex, as well as at least some lipoproteins. Aids folding of multispanning membrane proteins. This is Membrane protein insertase YidC from Nitrobacter hamburgensis (strain DSM 10229 / NCIMB 13809 / X14).